A 351-amino-acid polypeptide reads, in one-letter code: Uroporphyrinogen decarboxylase (351 aa).

Residues 25–29 (RQAGR), D74, Y151, S206, and H325 contribute to the substrate site.

Belongs to the uroporphyrinogen decarboxylase family. In terms of assembly, homodimer.

The protein resides in the cytoplasm. It carries out the reaction uroporphyrinogen III + 4 H(+) = coproporphyrinogen III + 4 CO2. The protein operates within porphyrin-containing compound metabolism; protoporphyrin-IX biosynthesis; coproporphyrinogen-III from 5-aminolevulinate: step 4/4. Its function is as follows. Catalyzes the decarboxylation of four acetate groups of uroporphyrinogen-III to yield coproporphyrinogen-III. The polypeptide is Uroporphyrinogen decarboxylase (Chlorobium luteolum (strain DSM 273 / BCRC 81028 / 2530) (Pelodictyon luteolum)).